The sequence spans 341 residues: GDP-mannose transporter GONST5 (341 aa).

8 helical membrane-spanning segments follow: residues 17 to 37 (LSIL…KWIF), 44 to 64 (FPLS…YIVI), 89 to 109 (FVFC…PVSF), 141 to 161 (LVPI…FNVF), 192 to 212 (INTV…PAFL), 233 to 253 (IILF…FYVI), 260 to 280 (TFNV…WMIF), and 284 to 304 (ISPM…FYGY). Residues 33–152 (NKWIFQKLDF…PIVGGILLTS (120 aa)) enclose the EamA domain.

This sequence belongs to the TPT transporter family. TPT (TC 2.A.7.9) subfamily. Expressed in rosette leaves, flowers and siliques.

It localises to the golgi apparatus membrane. GDP-mannose transporter that may be involved in the import of GDP-mannose from the cytoplasm into the Golgi lumen. This is GDP-mannose transporter GONST5 (GONST5) from Arabidopsis thaliana (Mouse-ear cress).